The sequence spans 317 residues: Orange carotenoid-binding protein (317 aa).

Residues 18–169 (ADVVPATIAR…DMGFDTSKLG (152 aa)) enclose the OCP N-terminal domain. 3 residues coordinate 3'-hydroxyechinenone: leucine 37, tyrosine 203, and tryptophan 290.

It belongs to the orange carotenoid-binding protein family. In terms of assembly, homodimer. 3'-hydroxyechinenone is required as a cofactor. In terms of processing, proteolytically cleaved into a red 16.7 kDa form named red carotenoid-binding protein (RCP) which lacks 15 residues from the N-terminus and approximately 150 residues from the C-terminus.

Its subcellular location is the cellular thylakoid membrane. Functionally, acts as a blue-light photoreceptor and photo-protectant. Essential for inhibiting damaged induced by excess blue-green light via a process known as non-photochemical quenching (NPQ). Binding carotenoids improves OCP's intrinsic photoprotectant activity by broadening its absorption spectrum and facilitating the dissipation of absorbed energy. In the dark or dim light the stable inactive form (OCP-O) is orange, upon illumination with blue-green light it converts to a metastable active red form (OCP-R), inducing energy dissipation, quenching cellular fluorescence via NPQ. The sequence is that of Orange carotenoid-binding protein from Limnospira maxima (Arthrospira maxima).